An 810-amino-acid polypeptide reads, in one-letter code: Actin-regulating kinase PRK1 (810 aa).

Residues 22–298 (AKIIKYLTSG…CQVLEEVSRL (277 aa)) form the Protein kinase domain. ATP-binding positions include 28-36 (LTSGGFAQV) and Lys56. The active-site Proton acceptor is Asp158. Phosphoserine occurs at positions 402, 428, and 484. Disordered stretches follow at residues 552–668 (FTGN…NVNI) and 733–761 (GVLDIKTKSNGKDKSRPPRPPPKPLHLRT). The residue at position 553 (Thr553) is a Phosphothreonine. Residues 553-566 (TGNSVNNSRSASFD) are compositionally biased toward polar residues. Ser556 bears the Phosphoserine mark. The segment covering 567–588 (NNNVNGNGNNTNRRLVSSSTSS) has biased composition (low complexity). 2 stretches are compositionally biased toward basic and acidic residues: residues 594–612 (SDTKRKEESDKNQRLEKRR) and 622–639 (FDQHERNNSRTGSRDYYR). Over residues 645-658 (KKTQASAKTTSKPT) the composition is skewed to low complexity. Basic and acidic residues predominate over residues 733-748 (GVLDIKTKSNGKDKSR). The interaction with SH3 domain of ABP1 stretch occupies residues 743–756 (GKDKSRPPRPPPKP).

Belongs to the protein kinase superfamily. Ser/Thr protein kinase family. Interacts with ABP1, which is required for proper actin patch localization.

Its subcellular location is the cytoplasm. The protein resides in the cytoskeleton. It is found in the actin patch. The catalysed reaction is L-seryl-[protein] + ATP = O-phospho-L-seryl-[protein] + ADP + H(+). It catalyses the reaction L-threonyl-[protein] + ATP = O-phospho-L-threonyl-[protein] + ADP + H(+). Protein kinase involved in the regulation of actin cytoskeleton organization and endocytosis. Phosphorylates PAN1 which disrupts the interaction between PAN1 and END3, and between PAN1 and SLA1. Phosphorylates SCD5. Preferentially, phosphorylates substrates on threonine residues in a [L/I/V/M]-x-x-[Q/N/T/S]-x-T-G motif. The chain is Actin-regulating kinase PRK1 (PRK1) from Saccharomyces cerevisiae (strain ATCC 204508 / S288c) (Baker's yeast).